Reading from the N-terminus, the 520-residue chain is MAALRLLAWALPRGVSALRPRPALPHRLIRRYVSDRSGSVHFYTDPVKAVEGVKDGSTVMLGGFGLCGIPENLIGALKTKGVKDLKIVSSNVGVDDFGLGILLASKQVRRVVCSYLGENALCEKLYLAGELELEMTPQGTLAERIRACGTGVPAFYTPTGYGTLVQEGGSPIRYAPDGHLITLSEPREVREFQGRFYLLEHAIRADFALIKGWKADRSGNVIFRGSARNFNVPMCKAADISVVEVEEIVDVGTFAPEDIHIPNIYVDRVIKGPKFEKRIERLTTRDSKPAPGSKDNDPSRTRIIKRAALEFQDGMYANLGIGIPVLASNYISPKMTVYLHSENGILGLGPFPLKNEVDADVINAGKQTVTVVPGGCFFASDDSFAMIRGGHLQLTMLGAMQVSQYGDLANWMVPGKKVKGMGGAMDLVSSKKTRVVVTMEHCTKTKQPKILKKCTMPLTGKRCVDLIITEKAVFEVNHSKGLTLVELWEGSSVDDIKATTACSFAVSPNLKPMQQIKLDA.

Residues Met1–Ser39 constitute a mitochondrion transit peptide. Positions Glu280–Ser299 are disordered. Residue Glu342 is the 5-glutamyl coenzyme A thioester intermediate of the active site.

The protein belongs to the 3-oxoacid CoA-transferase family. Homodimer. In terms of tissue distribution, testis specific. Expressed in late spermatids. Accumulates during spermiogenesis. Also detected in the midpiece of spermatozoa.

The protein localises to the mitochondrion. The catalysed reaction is a 3-oxo acid + succinyl-CoA = a 3-oxoacyl-CoA + succinate. It participates in ketone metabolism; succinyl-CoA degradation; acetoacetyl-CoA from succinyl-CoA: step 1/1. Key enzyme for ketone body catabolism. Transfers the CoA moiety from succinate to acetoacetate. Formation of the enzyme-CoA intermediate proceeds via an unstable anhydride species formed between the carboxylate groups of the enzyme and substrate. Probably play and important roles in the energy metabolism of spermatozoa. The sequence is that of Succinyl-CoA:3-ketoacid coenzyme A transferase 2B, mitochondrial (Oxct2b) from Mus musculus (Mouse).